Here is a 644-residue protein sequence, read N- to C-terminus: Chaperone protein DnaK (644 aa).

Disordered regions lie at residues 490–533 (QEEA…ELDD) and 570–644 (EELQ…EDDA). A compositionally biased stretch (basic and acidic residues) spans 492 to 513 (EAEKHKEEDEARRERIEARNEA). Over residues 523–533 (LLEENEEELDD) the composition is skewed to acidic residues. Positions 588-622 (GPGGAGGAAGAGPGGMGGMGGAAGPGGAGGAGPGG) are enriched in gly residues. The span at 624–644 (DADDEEYVDADFEDVDDEDDA) shows a compositional bias: acidic residues.

Belongs to the heat shock protein 70 family.

Its function is as follows. Acts as a chaperone. This is Chaperone protein DnaK from Halorubrum lacusprofundi (strain ATCC 49239 / DSM 5036 / JCM 8891 / ACAM 34).